The chain runs to 440 residues: 3-phosphoshikimate 1-carboxyvinyltransferase (440 aa).

Residues Lys26, Ser27, and Arg31 each contribute to the 3-phosphoshikimate site. Position 26 (Lys26) interacts with phosphoenolpyruvate. Residues Gly99 and Arg127 each contribute to the phosphoenolpyruvate site. Positions 172, 174, 320, and 347 each coordinate 3-phosphoshikimate. Position 174 (Gln174) interacts with phosphoenolpyruvate. Asp320 serves as the catalytic Proton acceptor. 2 residues coordinate phosphoenolpyruvate: Arg351 and Arg392.

It belongs to the EPSP synthase family. In terms of assembly, monomer.

It is found in the cytoplasm. The catalysed reaction is 3-phosphoshikimate + phosphoenolpyruvate = 5-O-(1-carboxyvinyl)-3-phosphoshikimate + phosphate. It functions in the pathway metabolic intermediate biosynthesis; chorismate biosynthesis; chorismate from D-erythrose 4-phosphate and phosphoenolpyruvate: step 6/7. Functionally, catalyzes the transfer of the enolpyruvyl moiety of phosphoenolpyruvate (PEP) to the 5-hydroxyl of shikimate-3-phosphate (S3P) to produce enolpyruvyl shikimate-3-phosphate and inorganic phosphate. The chain is 3-phosphoshikimate 1-carboxyvinyltransferase from Xanthomonas euvesicatoria pv. vesicatoria (strain 85-10) (Xanthomonas campestris pv. vesicatoria).